Reading from the N-terminus, the 128-residue chain is Small ribosomal subunit protein bS6 (128 aa).

It belongs to the bacterial ribosomal protein bS6 family.

Binds together with bS18 to 16S ribosomal RNA. The protein is Small ribosomal subunit protein bS6 of Leifsonia xyli subsp. xyli (strain CTCB07).